We begin with the raw amino-acid sequence, 958 residues long: Valine--tRNA ligase (958 aa).

A 'HIGH' region motif is present at residues 42–52; sequence PNVTGSLHMGH. A 'KMSKS' region motif is present at residues 554–558; the sequence is KMSKS. K557 provides a ligand contact to ATP. Positions 887–956 form a coiled coil; the sequence is LVDVAAEMAR…TEQKAEFAKL (70 aa).

It belongs to the class-I aminoacyl-tRNA synthetase family. ValS type 1 subfamily. In terms of assembly, monomer.

Its subcellular location is the cytoplasm. It catalyses the reaction tRNA(Val) + L-valine + ATP = L-valyl-tRNA(Val) + AMP + diphosphate. Its function is as follows. Catalyzes the attachment of valine to tRNA(Val). As ValRS can inadvertently accommodate and process structurally similar amino acids such as threonine, to avoid such errors, it has a 'posttransfer' editing activity that hydrolyzes mischarged Thr-tRNA(Val) in a tRNA-dependent manner. The chain is Valine--tRNA ligase from Shewanella oneidensis (strain ATCC 700550 / JCM 31522 / CIP 106686 / LMG 19005 / NCIMB 14063 / MR-1).